A 372-amino-acid polypeptide reads, in one-letter code: tRNA-specific 2-thiouridylase MnmA (372 aa).

ATP is bound by residues 7-14 (GLSGGVDS) and Met33. The segment at 104 to 106 (NPD) is interaction with target base in tRNA. The active-site Nucleophile is the Cys109. An intrachain disulfide couples Cys109 to Cys202. Residue Gly134 coordinates ATP. Positions 152 to 154 (KDQ) are interaction with tRNA. The active-site Cysteine persulfide intermediate is Cys202. Residues 310–311 (RY) are interaction with tRNA.

It belongs to the MnmA/TRMU family.

It localises to the cytoplasm. It carries out the reaction S-sulfanyl-L-cysteinyl-[protein] + uridine(34) in tRNA + AH2 + ATP = 2-thiouridine(34) in tRNA + L-cysteinyl-[protein] + A + AMP + diphosphate + H(+). Its function is as follows. Catalyzes the 2-thiolation of uridine at the wobble position (U34) of tRNA, leading to the formation of s(2)U34. This Mesomycoplasma hyopneumoniae (strain 232) (Mycoplasma hyopneumoniae) protein is tRNA-specific 2-thiouridylase MnmA.